Reading from the N-terminus, the 148-residue chain is Arginine repressor (148 aa).

Belongs to the ArgR family.

It is found in the cytoplasm. The protein operates within amino-acid biosynthesis; L-arginine biosynthesis [regulation]. Regulates arginine biosynthesis genes. The sequence is that of Arginine repressor from Chloroherpeton thalassium (strain ATCC 35110 / GB-78).